A 481-amino-acid chain; its full sequence is MQDKTHSPIHVVGGGLAGSEAAWQIAESGVPVILHEMRGVRGTDAHKGDTLAELVCSNSFRSDDATANAVGVIHAEMRLAGSLIIACADKHQVPAGGALAVDRDGFSQAVTDMLENHPLVTVVREEVTGLPPKEWGSTVIATGPLTSPDLAAAVQAETGEDALAFFDAIAPILHRDSINMDICWYQSRYDKVGPGGTGKDYINCPMDEEQYNVFIDALIAGDTVGFKEWEGTPYFDGCLPIEIMAERGRQTLRHGPMKPMGLTNAHNPTVKAYAVVQLRQDNALGTLYNMVGFQTKLKYSVQADVFRMIPGLENAEFARLGGLHRNTYIDSPILLDRSLRLKSRPDLRFAGQITGCEGYVESASVGLLAGRFAAAERKGEAPSLPPATTALGSLLNHITGGHLSSDDEPGKRSFQPMNINFGLFPELEPGSIVKPDGVKRFRGKDKTIMKRQLVAARALKDCAAWLGVERVATEQESDATP.

FAD is bound at residue 13–18 (GGGLAG).

It belongs to the MnmG family. TrmFO subfamily. It depends on FAD as a cofactor.

It localises to the cytoplasm. It catalyses the reaction uridine(54) in tRNA + (6R)-5,10-methylene-5,6,7,8-tetrahydrofolate + NADH + H(+) = 5-methyluridine(54) in tRNA + (6S)-5,6,7,8-tetrahydrofolate + NAD(+). The catalysed reaction is uridine(54) in tRNA + (6R)-5,10-methylene-5,6,7,8-tetrahydrofolate + NADPH + H(+) = 5-methyluridine(54) in tRNA + (6S)-5,6,7,8-tetrahydrofolate + NADP(+). Catalyzes the folate-dependent formation of 5-methyl-uridine at position 54 (M-5-U54) in all tRNAs. This chain is Methylenetetrahydrofolate--tRNA-(uracil-5-)-methyltransferase TrmFO, found in Agrobacterium fabrum (strain C58 / ATCC 33970) (Agrobacterium tumefaciens (strain C58)).